Here is a 264-residue protein sequence, read N- to C-terminus: [LysW]-aminoadipate/[LysW]-glutamate kinase (264 aa).

Residues 35–36 (GG), R62, and N167 contribute to the substrate site.

It belongs to the acetylglutamate kinase family. LysZ subfamily.

The protein resides in the cytoplasm. It catalyses the reaction [amino-group carrier protein]-C-terminal-N-(1,4-dicarboxybutan-1-yl)-L-glutamine + ATP = [amino-group carrier protein]-C-terminal-N-(1-carboxy-5-phosphooxy-5-oxopentan-1-yl)-L-glutamine + ADP. The catalysed reaction is [amino-group carrier protein]-C-terminal-gamma-(L-glutamyl)-L-glutamate + ATP = [amino-group carrier protein]-C-terminal-gamma-(5-phospho-L-glutamyl)-L-glutamate + ADP. It participates in amino-acid biosynthesis; L-lysine biosynthesis via AAA pathway; L-lysine from L-alpha-aminoadipate (Thermus route): step 2/5. Its pathway is amino-acid biosynthesis; L-arginine biosynthesis. Involved in both the arginine and lysine biosynthetic pathways. Phosphorylates the LysW-bound precursors glutamate (for arginine biosynthesis), respectively alpha-aminoadipate (for lysine biosynthesis). The protein is [LysW]-aminoadipate/[LysW]-glutamate kinase of Saccharolobus solfataricus (strain ATCC 35092 / DSM 1617 / JCM 11322 / P2) (Sulfolobus solfataricus).